The sequence spans 222 residues: Peptide methionine sulfoxide reductase MsrA 1 (222 aa).

Cys-57 is an active-site residue.

It belongs to the MsrA Met sulfoxide reductase family.

The catalysed reaction is L-methionyl-[protein] + [thioredoxin]-disulfide + H2O = L-methionyl-(S)-S-oxide-[protein] + [thioredoxin]-dithiol. It catalyses the reaction [thioredoxin]-disulfide + L-methionine + H2O = L-methionine (S)-S-oxide + [thioredoxin]-dithiol. In terms of biological role, has an important function as a repair enzyme for proteins that have been inactivated by oxidation. Catalyzes the reversible oxidation-reduction of methionine sulfoxide in proteins to methionine. This is Peptide methionine sulfoxide reductase MsrA 1 (msrA1) from Synechocystis sp. (strain ATCC 27184 / PCC 6803 / Kazusa).